The primary structure comprises 385 residues: 1-deoxy-D-xylulose 5-phosphate reductoisomerase (385 aa).

NADPH contacts are provided by threonine 10, glycine 11, serine 12, isoleucine 13, glycine 36, asparagine 38, and asparagine 121. Lysine 122 contacts 1-deoxy-D-xylulose 5-phosphate. Residue glutamate 123 coordinates NADPH. Position 147 (aspartate 147) interacts with Mn(2+). 1-deoxy-D-xylulose 5-phosphate-binding residues include serine 148, glutamate 149, serine 173, and histidine 196. Mn(2+) is bound at residue glutamate 149. An NADPH-binding site is contributed by glycine 202. 1-deoxy-D-xylulose 5-phosphate is bound by residues serine 209, asparagine 214, lysine 215, and glutamate 218. Glutamate 218 provides a ligand contact to Mn(2+).

Belongs to the DXR family. It depends on Mg(2+) as a cofactor. Mn(2+) serves as cofactor.

It catalyses the reaction 2-C-methyl-D-erythritol 4-phosphate + NADP(+) = 1-deoxy-D-xylulose 5-phosphate + NADPH + H(+). It functions in the pathway isoprenoid biosynthesis; isopentenyl diphosphate biosynthesis via DXP pathway; isopentenyl diphosphate from 1-deoxy-D-xylulose 5-phosphate: step 1/6. In terms of biological role, catalyzes the NADPH-dependent rearrangement and reduction of 1-deoxy-D-xylulose-5-phosphate (DXP) to 2-C-methyl-D-erythritol 4-phosphate (MEP). This chain is 1-deoxy-D-xylulose 5-phosphate reductoisomerase, found in Exiguobacterium sp. (strain ATCC BAA-1283 / AT1b).